The primary structure comprises 197 residues: Probable nicotinate-nucleotide adenylyltransferase (197 aa).

The protein belongs to the NadD family.

The enzyme catalyses nicotinate beta-D-ribonucleotide + ATP + H(+) = deamido-NAD(+) + diphosphate. It participates in cofactor biosynthesis; NAD(+) biosynthesis; deamido-NAD(+) from nicotinate D-ribonucleotide: step 1/1. Functionally, catalyzes the reversible adenylation of nicotinate mononucleotide (NaMN) to nicotinic acid adenine dinucleotide (NaAD). The chain is Probable nicotinate-nucleotide adenylyltransferase from Bordetella parapertussis (strain 12822 / ATCC BAA-587 / NCTC 13253).